The following is a 795-amino-acid chain: Plakophilin-2 (795 aa).

The segment at 1–318 is required for binding to single-stranded DNA; that stretch reads MAVPGSLAEC…MTLERAVNML (318 aa). The residue at position 44 (Ser44) is a Phosphoserine. Arg46 carries the omega-N-methylarginine modification. Phosphoserine occurs at positions 82, 132, 135, 151, 154, 155, 172, 188, and 232. Disordered stretches follow at residues 197–233 and 245–274; these read GTAR…SHSA and SQAR…REPG. A compositionally biased stretch (polar residues) spans 245–257; that stretch reads SQARLQSTQSRTA. The segment covering 258–268 has biased composition (low complexity); that stretch reads RSSWPRSSVRS. Residues Ser265 and Ser287 each carry the phosphoserine modification. 8 ARM repeats span residues 299–339, 343–382, 385–425, 484–530, 585–625, 633–672, 677–718, and 721–763; these read DAQL…QHES, SEAR…NLVF, NDNK…NLSS, PDGR…NLSY, PHGI…NLTA, LVAR…NLSR, QNEI…NLMQ, and YQNA…SLWA.

This sequence belongs to the beta-catenin family. Interacts with DSC2. Interacts with JUP. Interacts with KRT5/CK5, KRT8/CK8, KRT14/CK14, KRT18/CK18 and VIM. Interacts (via N-terminus) with MARK3/C-TAK1. Interacts with DSP. Interacts with DSG1, DSG2 and DSG3. Interacts (via N-terminus) with CTNNB1. Interacts with CDH1. Interacts with the RNA polymerase III (Pol III) complex proteins POLR3A/RPC155, POLR3F/RPC39 and POLR3C/RPC82. Interacts with CTNNA3. Interacts (via N-terminus) with SCN5A/Nav1.5. Interacts with ANK3/ANKG and GJA1/CX43. In terms of tissue distribution, expressed in cardiomyocytes in the heart (at protein level).

Its subcellular location is the nucleus. The protein resides in the cell junction. It localises to the desmosome. It is found in the cytoplasm. In terms of biological role, a component of desmosome cell-cell junctions which are required for positive regulation of cellular adhesion. Regulates focal adhesion turnover resulting in changes in focal adhesion size, cell adhesion and cell spreading, potentially via transcriptional modulation of beta-integrins. Required to maintain gingival epithelial barrier function. Important component of the desmosome that is also required for localization of desmosome component proteins such as DSC2, DSG2 and JUP to the desmosome cell-cell junction. Required for the formation of desmosome cell junctions in cardiomyocytes, thereby required for the correct formation of the heart, specifically trabeculation and formation of the atria walls. Loss of desmosome cell junctions leads to mis-localization of DSP and DSG2 resulting in disruption of cell-cell adhesion and disordered intermediate filaments. Modulates profibrotic gene expression in cardiomyocytes via regulation of DSP expression and subsequent activation of downstream TGFB1 and MAPK14/p38 MAPK signaling. Required for cardiac sodium current propagation and electrical synchrony in cardiac myocytes, via ANK3 stabilization and modulation of SCN5A/Nav1.5 localization to cell-cell junctions. Required for mitochondrial function, nuclear envelope integrity and positive regulation of SIRT3 transcription via maintaining DES localization at its nuclear envelope and cell tip anchoring points, and thereby preserving regulation of the transcriptional program. Maintenance of nuclear envelope integrity protects against DNA damage and transcriptional dysregulation of genes, especially those involved in the electron transport chain, thereby preserving mitochondrial function and protecting against superoxide radical anion generation. Binds single-stranded DNA (ssDNA). May regulate the localization of GJA1 to gap junctions in intercalated disks of the heart. In Mus musculus (Mouse), this protein is Plakophilin-2.